Consider the following 126-residue polypeptide: Histone H2B type 1-K (126 aa).

Over residues Met-1–Lys-12 the composition is skewed to low complexity. The tract at residues Met-1–Glu-36 is disordered. Pro-2 carries the N-acetylproline modification. Glu-3 bears the ADP-ribosyl glutamic acid mark. Position 6 is an N6-(2-hydroxyisobutyryl)lysine; alternate (Lys-6). Lys-6 carries the post-translational modification N6-(beta-hydroxybutyryl)lysine; alternate. At Lys-6 the chain carries N6-acetyllysine; alternate. The residue at position 6 (Lys-6) is an N6-butyryllysine; alternate. The residue at position 6 (Lys-6) is an N6-crotonyllysine; alternate. An N6-lactoyllysine; alternate modification is found at Lys-6. Lys-6 participates in a covalent cross-link: Glycyl lysine isopeptide (Lys-Gly) (interchain with G-Cter in SUMO2); alternate. An ADP-ribosylserine modification is found at Ser-7. Lys-12 carries the post-translational modification N6-(beta-hydroxybutyryl)lysine; alternate. Lys-12 and Lys-13 each carry N6-acetyllysine; alternate. Residues Lys-12 and Lys-13 each carry the N6-crotonyllysine; alternate modification. Residue Lys-12 is modified to N6-lactoyllysine; alternate. At Lys-13 the chain carries N6-(2-hydroxyisobutyryl)lysine; alternate. A Phosphoserine; by STK4/MST1 modification is found at Ser-15. Residues Lys-16, Lys-17, Lys-21, and Lys-24 each carry the N6-acetyllysine; alternate modification. Lys-16, Lys-17, Lys-21, and Lys-24 each carry N6-crotonyllysine; alternate. N6-lactoyllysine; alternate is present on residues Lys-16, Lys-17, Lys-21, and Lys-24. Lys-17 carries the post-translational modification N6-glutaryllysine; alternate. An N6-(2-hydroxyisobutyryl)lysine; alternate mark is found at Lys-21 and Lys-24. Position 21 is an N6-(beta-hydroxybutyryl)lysine; alternate (Lys-21). Lys-21 is modified (N6-butyryllysine; alternate). Residue Lys-21 forms a Glycyl lysine isopeptide (Lys-Gly) (interchain with G-Cter in SUMO2); alternate linkage. Residue Lys-25 is modified to N6-(2-hydroxyisobutyryl)lysine. Lys-35 is subject to N6-(2-hydroxyisobutyryl)lysine; alternate. At Lys-35 the chain carries N6-(beta-hydroxybutyryl)lysine; alternate. N6-crotonyllysine; alternate is present on Lys-35. The residue at position 35 (Lys-35) is an N6-glutaryllysine; alternate. Lys-35 bears the N6-succinyllysine; alternate mark. A Glycyl lysine isopeptide (Lys-Gly) (interchain with G-Cter in ubiquitin); alternate cross-link involves residue Lys-35. Glu-36 bears the PolyADP-ribosyl glutamic acid mark. At Ser-37 the chain carries Phosphoserine; by AMPK. N6-(2-hydroxyisobutyryl)lysine; alternate is present on residues Lys-44, Lys-47, and Lys-58. An N6-lactoyllysine; alternate modification is found at Lys-44. Lys-44 and Lys-47 each carry N6-glutaryllysine; alternate. Position 47 is an N6-methyllysine; alternate (Lys-47). N6,N6-dimethyllysine; alternate is present on Lys-58. At Arg-80 the chain carries Dimethylated arginine. At Lys-86 the chain carries N6-(2-hydroxyisobutyryl)lysine; alternate. The residue at position 86 (Lys-86) is an N6-acetyllysine; alternate. Residue Lys-86 is modified to N6-lactoyllysine; alternate. Lys-86 bears the N6,N6,N6-trimethyllysine; alternate mark. 2 positions are modified to omega-N-methylarginine: Arg-87 and Arg-93. Lys-109 is subject to N6-(2-hydroxyisobutyryl)lysine; alternate. Lys-109 is subject to N6-(beta-hydroxybutyryl)lysine; alternate. Residue Lys-109 is modified to N6-lactoyllysine; alternate. Position 109 is an N6-glutaryllysine; alternate (Lys-109). Lys-109 bears the N6-methyllysine; alternate mark. Ser-113 carries an O-linked (GlcNAc) serine glycan. Thr-116 bears the Phosphothreonine mark. N6-(2-hydroxyisobutyryl)lysine; alternate occurs at positions 117 and 121. Position 117 is an N6-(beta-hydroxybutyryl)lysine; alternate (Lys-117). An N6-lactoyllysine; alternate mark is found at Lys-117 and Lys-121. An N6-glutaryllysine; alternate mark is found at Lys-117 and Lys-121. N6-succinyllysine; alternate is present on residues Lys-117 and Lys-121. N6-methylated lysine; alternate is present on Lys-117. Lys-121 participates in a covalent cross-link: Glycyl lysine isopeptide (Lys-Gly) (interchain with G-Cter in ubiquitin); alternate.

The protein belongs to the histone H2B family. In terms of assembly, the nucleosome is a histone octamer containing two molecules each of H2A, H2B, H3 and H4 assembled in one H3-H4 heterotetramer and two H2A-H2B heterodimers. The octamer wraps approximately 147 bp of DNA. Post-translationally, monoubiquitination at Lys-35 (H2BK34Ub) by the MSL1/MSL2 dimer is required for histone H3 'Lys-4' (H3K4me) and 'Lys-79' (H3K79me) methylation and transcription activation at specific gene loci, such as HOXA9 and MEIS1 loci. Similarly, monoubiquitination at Lys-121 (H2BK120Ub) by the RNF20/40 complex gives a specific tag for epigenetic transcriptional activation and is also prerequisite for histone H3 'Lys-4' and 'Lys-79' methylation. It also functions cooperatively with the FACT dimer to stimulate elongation by RNA polymerase II. H2BK120Ub also acts as a regulator of mRNA splicing: deubiquitination by USP49 is required for efficient cotranscriptional splicing of a large set of exons. Phosphorylated on Ser-15 (H2BS14ph) by STK4/MST1 during apoptosis; which facilitates apoptotic chromatin condensation. Also phosphorylated on Ser-15 in response to DNA double strand breaks (DSBs), and in correlation with somatic hypermutation and immunoglobulin class-switch recombination. Phosphorylation at Ser-37 (H2BS36ph) by AMPK in response to stress promotes transcription. In terms of processing, glcNAcylation at Ser-113 promotes monoubiquitination of Lys-121. It fluctuates in response to extracellular glucose, and associates with transcribed genes. Post-translationally, ADP-ribosylated by PARP1 or PARP2 on Ser-7 (H2BS6ADPr) in response to DNA damage. H2BS6ADPr promotes recruitment of CHD1L. Mono-ADP-ribosylated on Glu-3 (H2BE2ADPr) by PARP3 in response to single-strand breaks. Poly ADP-ribosylation on Glu-36 (H2BE35ADPr) by PARP1 regulates adipogenesis: it inhibits phosphorylation at Ser-37 (H2BS36ph), thereby blocking expression of pro-adipogenetic genes. Crotonylation (Kcr) is specifically present in male germ cells and marks testis-specific genes in post-meiotic cells, including X-linked genes that escape sex chromosome inactivation in haploid cells. Crotonylation marks active promoters and enhancers and confers resistance to transcriptional repressors. It is also associated with post-meiotically activated genes on autosomes. In terms of processing, hydroxybutyrylation of histones is induced by starvation. Post-translationally, lactylated in macrophages by EP300/P300 by using lactoyl-CoA directly derived from endogenous or exogenous lactate, leading to stimulates gene transcription.

It localises to the nucleus. It is found in the chromosome. In terms of biological role, core component of nucleosome. Nucleosomes wrap and compact DNA into chromatin, limiting DNA accessibility to the cellular machineries which require DNA as a template. Histones thereby play a central role in transcription regulation, DNA repair, DNA replication and chromosomal stability. DNA accessibility is regulated via a complex set of post-translational modifications of histones, also called histone code, and nucleosome remodeling. This is Histone H2B type 1-K from Mus musculus (Mouse).